A 353-amino-acid polypeptide reads, in one-letter code: Probable D-xylulose reductase A (353 aa).

Zn(2+)-binding residues include Cys42, His67, and Glu68. 177–182 (GAGPVG) lines the NAD(+) pocket.

This sequence belongs to the zinc-containing alcohol dehydrogenase family. Zn(2+) serves as cofactor.

It catalyses the reaction xylitol + NAD(+) = D-xylulose + NADH + H(+). Its pathway is carbohydrate degradation; L-arabinose degradation via L-arabinitol; D-xylulose 5-phosphate from L-arabinose (fungal route): step 4/5. Xylitol dehydrogenase which catalyzes the conversion of xylitol to D-xylulose. Xylose is a major component of hemicelluloses such as xylan. Most fungi utilize D-xylose via three enzymatic reactions, xylose reductase (XR), xylitol dehydrogenase (XDH), and xylulokinase, to form xylulose 5-phosphate, which enters pentose phosphate pathway. The sequence is that of Probable D-xylulose reductase A (xdhA) from Aspergillus terreus (strain NIH 2624 / FGSC A1156).